The chain runs to 366 residues: Quinolinate synthase (366 aa).

Iminosuccinate contacts are provided by His-44 and Ser-61. Cys-108 contacts [4Fe-4S] cluster. Residues 139–141 (YIN) and Ser-160 contribute to the iminosuccinate site. Cys-228 is a binding site for [4Fe-4S] cluster. Residues 254–256 (HPE) and Thr-271 each bind iminosuccinate. Cys-318 contributes to the [4Fe-4S] cluster binding site.

It belongs to the quinolinate synthase family. Type 3 subfamily. [4Fe-4S] cluster serves as cofactor.

It localises to the cytoplasm. It catalyses the reaction iminosuccinate + dihydroxyacetone phosphate = quinolinate + phosphate + 2 H2O + H(+). The protein operates within cofactor biosynthesis; NAD(+) biosynthesis; quinolinate from iminoaspartate: step 1/1. Its function is as follows. Catalyzes the condensation of iminoaspartate with dihydroxyacetone phosphate to form quinolinate. The sequence is that of Quinolinate synthase from Listeria innocua serovar 6a (strain ATCC BAA-680 / CLIP 11262).